Here is an 83-residue protein sequence, read N- to C-terminus: Cytochrome b559 subunit alpha (83 aa).

A helical membrane pass occupies residues 21-35 (VIHSITIPSLFIAGW). A heme-binding site is contributed by histidine 23.

This sequence belongs to the PsbE/PsbF family. In terms of assembly, heterodimer of an alpha subunit and a beta subunit. PSII is composed of 1 copy each of membrane proteins PsbA, PsbB, PsbC, PsbD, PsbE, PsbF, PsbH, PsbI, PsbJ, PsbK, PsbL, PsbM, PsbT, PsbX, PsbY, PsbZ, Psb30/Ycf12, at least 3 peripheral proteins of the oxygen-evolving complex and a large number of cofactors. It forms dimeric complexes. Heme b is required as a cofactor.

The protein resides in the plastid. It localises to the chloroplast thylakoid membrane. In terms of biological role, this b-type cytochrome is tightly associated with the reaction center of photosystem II (PSII). PSII is a light-driven water:plastoquinone oxidoreductase that uses light energy to abstract electrons from H(2)O, generating O(2) and a proton gradient subsequently used for ATP formation. It consists of a core antenna complex that captures photons, and an electron transfer chain that converts photonic excitation into a charge separation. The polypeptide is Cytochrome b559 subunit alpha (Acorus calamus (Sweet flag)).